We begin with the raw amino-acid sequence, 238 residues long: Transcriptional repressor ThaA (238 aa).

Residues 169–234 (IPGEIARVSL…HAAVKATLVG (66 aa)) enclose the HTH luxR-type domain. A DNA-binding region (H-T-H motif) is located at residues 193-212 (VSEISSILQMSVRNINFHIQ).

It belongs to the autoinducer-regulated transcriptional regulatory protein family.

Its function is as follows. Represses thailandamide production. The sequence is that of Transcriptional repressor ThaA from Burkholderia thailandensis (strain ATCC 700388 / DSM 13276 / CCUG 48851 / CIP 106301 / E264).